The following is a 765-amino-acid chain: 1,4-alpha-glucan branching enzyme GlgB (765 aa).

Residue Asp431 is the Nucleophile of the active site. Glu484 serves as the catalytic Proton donor.

Belongs to the glycosyl hydrolase 13 family. GlgB subfamily. As to quaternary structure, monomer.

The enzyme catalyses Transfers a segment of a (1-&gt;4)-alpha-D-glucan chain to a primary hydroxy group in a similar glucan chain.. Its pathway is glycan biosynthesis; glycogen biosynthesis. Functionally, catalyzes the formation of the alpha-1,6-glucosidic linkages in glycogen by scission of a 1,4-alpha-linked oligosaccharide from growing alpha-1,4-glucan chains and the subsequent attachment of the oligosaccharide to the alpha-1,6 position. The chain is 1,4-alpha-glucan branching enzyme GlgB from Synechococcus sp. (strain CC9311).